Reading from the N-terminus, the 399-residue chain is Tryptophan synthase beta chain (399 aa).

Lysine 92 is subject to N6-(pyridoxal phosphate)lysine.

It belongs to the TrpB family. In terms of assembly, tetramer of two alpha and two beta chains. It depends on pyridoxal 5'-phosphate as a cofactor.

It catalyses the reaction (1S,2R)-1-C-(indol-3-yl)glycerol 3-phosphate + L-serine = D-glyceraldehyde 3-phosphate + L-tryptophan + H2O. Its pathway is amino-acid biosynthesis; L-tryptophan biosynthesis; L-tryptophan from chorismate: step 5/5. Functionally, the beta subunit is responsible for the synthesis of L-tryptophan from indole and L-serine. The polypeptide is Tryptophan synthase beta chain (Legionella pneumophila subsp. pneumophila (strain Philadelphia 1 / ATCC 33152 / DSM 7513)).